The primary structure comprises 240 residues: tRNA (guanine-N(1)-)-methyltransferase (240 aa).

S-adenosyl-L-methionine contacts are provided by residues Gly-110 and Leu-129 to Leu-134.

Belongs to the RNA methyltransferase TrmD family. As to quaternary structure, homodimer.

The protein resides in the cytoplasm. It catalyses the reaction guanosine(37) in tRNA + S-adenosyl-L-methionine = N(1)-methylguanosine(37) in tRNA + S-adenosyl-L-homocysteine + H(+). Functionally, specifically methylates guanosine-37 in various tRNAs. The chain is tRNA (guanine-N(1)-)-methyltransferase from Clostridium botulinum (strain Loch Maree / Type A3).